Reading from the N-terminus, the 110-residue chain is Late cornified envelope protein 2D (110 aa).

Belongs to the LCE family. As to expression, skin-specific. Expression was readily detected in adult trunk skin, adult arm skin, fetal skin, penal skin, vulva, esophagus and tongue. Not expressed in the cervix, rectum, lung, colon, or placenta.

Its function is as follows. Precursors of the cornified envelope of the stratum corneum. This is Late cornified envelope protein 2D (LCE2D) from Homo sapiens (Human).